We begin with the raw amino-acid sequence, 795 residues long: Phenylalanine--tRNA ligase beta subunit (795 aa).

The tRNA-binding domain occupies 39–148; that stretch reads AGSFNGVVVG…ADAPLGTDIR (110 aa). Positions 401–476 constitute a B5 domain; the sequence is PKRATITLRR…RVYGYNNIPD (76 aa). The Mg(2+) site is built by Asp454, Asp460, Glu463, and Glu464. An FDX-ACB domain is found at 701-794; sequence SRFPANRRDI…LKERFQASLR (94 aa).

The protein belongs to the phenylalanyl-tRNA synthetase beta subunit family. Type 1 subfamily. As to quaternary structure, tetramer of two alpha and two beta subunits. Mg(2+) serves as cofactor.

Its subcellular location is the cytoplasm. It catalyses the reaction tRNA(Phe) + L-phenylalanine + ATP = L-phenylalanyl-tRNA(Phe) + AMP + diphosphate + H(+). This chain is Phenylalanine--tRNA ligase beta subunit, found in Salmonella choleraesuis (strain SC-B67).